A 559-amino-acid polypeptide reads, in one-letter code: Acetylcholinesterase-1 (559 aa).

The first 21 residues, 1–21 (MMLPRCFVTVLLMSSVLYIGG), serve as a signal peptide directing secretion. Residues cysteine 92 and cysteine 114 are joined by a disulfide bond. 142–143 (GG) contributes to the substrate binding site. Serine 223 acts as the Acyl-ester intermediate in catalysis. Residue serine 223 is modified to Phosphoserine. Cysteine 276 and cysteine 293 form a disulfide bridge. N-linked (GlcNAc...) asparagine glycans are attached at residues asparagine 278 and asparagine 342. Residue glutamate 354 is the Charge relay system of the active site. N-linked (GlcNAc...) asparagine glycosylation is present at asparagine 374. Residues cysteine 432 and cysteine 550 are joined by a disulfide bond. The Charge relay system role is filled by histidine 471.

The protein belongs to the type-B carboxylesterase/lipase family. In terms of tissue distribution, expressed by the venom gland.

Its subcellular location is the secreted. The catalysed reaction is acetylcholine + H2O = choline + acetate + H(+). Terminates signal transduction at the neuromuscular junction by rapid hydrolysis of the acetylcholine released into the synaptic cleft. In Trittame loki (Brush-footed trapdoor spider), this protein is Acetylcholinesterase-1.